Here is a 706-residue protein sequence, read N- to C-terminus: Envelope glycoprotein H (706 aa).

The signal sequence occupies residues 1–18 (MQLLCVFCLVLLWEVGAA). Topologically, residues 19–682 (SLSEVKLHLD…LYEERAHVVL (664 aa)) are virion surface. Asn-60 carries an N-linked (GlcNAc...) asparagine; by host glycan. Intrachain disulfides connect Cys-120–Cys-312 and Cys-278–Cys-335. Residues 165 to 229 (DKFQYTGAMT…QSGDYSLVIV (65 aa)) form an interaction with gL region. N-linked (GlcNAc...) asparagine; by host glycosylation is present at Asn-435. 2 disulfides stabilise this stretch: Cys-454–Cys-478 and Cys-534–Cys-587. Asn-549 and Asn-604 each carry an N-linked (GlcNAc...) asparagine; by host glycan. Cys-612 and Cys-615 are disulfide-bonded. N-linked (GlcNAc...) asparagine; by host glycosylation occurs at Asn-664. The chain crosses the membrane as a helical span at residues 683–703 (AIILYFIAFALGIFLVHKIVM). At 704-706 (FFL) the chain is on the intravirion side.

This sequence belongs to the herpesviridae glycoprotein H family. As to quaternary structure, interacts with glycoprotein L (gL); this interaction is necessary for the correct processing and cell surface expression of gH. The heterodimer gH/gL seems to interact with gB trimers during fusion. The heterodimer gH/gL interacts with host EPHA2 to facilitate virus internalization and fusion. Interacts with glycoprotein 42/BZLF2. Post-translationally, N-glycosylated, O-glycosylated, and sialylated.

It is found in the virion membrane. The protein resides in the host cell membrane. It localises to the host endosome membrane. Functionally, the heterodimer glycoprotein H-glycoprotein L is required for the fusion of viral and plasma membranes leading to virus entry into the host cell. Following initial binding to host receptor, membrane fusion is mediated by the fusion machinery composed of gB and the heterodimer gH/gL. May also be involved in the fusion between the virion envelope and the outer nuclear membrane during virion morphogenesis. The heterodimer gH/gL targets also host EPHA2 to promote viral entry. This is Envelope glycoprotein H from Homo sapiens (Human).